Reading from the N-terminus, the 110-residue chain is Large ribosomal subunit protein uL22 (110 aa).

This sequence belongs to the universal ribosomal protein uL22 family. As to quaternary structure, part of the 50S ribosomal subunit.

Its function is as follows. This protein binds specifically to 23S rRNA; its binding is stimulated by other ribosomal proteins, e.g. L4, L17, and L20. It is important during the early stages of 50S assembly. It makes multiple contacts with different domains of the 23S rRNA in the assembled 50S subunit and ribosome. In terms of biological role, the globular domain of the protein is located near the polypeptide exit tunnel on the outside of the subunit, while an extended beta-hairpin is found that lines the wall of the exit tunnel in the center of the 70S ribosome. This is Large ribosomal subunit protein uL22 from Vesicomyosocius okutanii subsp. Calyptogena okutanii (strain HA).